The primary structure comprises 188 residues: Large ribosomal subunit protein uL10 (188 aa).

This sequence belongs to the universal ribosomal protein uL10 family. Part of the ribosomal stalk of the 50S ribosomal subunit. The N-terminus interacts with L11 and the large rRNA to form the base of the stalk. The C-terminus forms an elongated spine to which L12 dimers bind in a sequential fashion forming a multimeric L10(L12)X complex.

Its function is as follows. Forms part of the ribosomal stalk, playing a central role in the interaction of the ribosome with GTP-bound translation factors. This chain is Large ribosomal subunit protein uL10, found in Crocosphaera subtropica (strain ATCC 51142 / BH68) (Cyanothece sp. (strain ATCC 51142)).